The following is a 161-amino-acid chain: Allophycocyanin alpha chain 1 (161 aa).

Asn-71 is subject to N4-methylasparagine. Cys-81 is a binding site for (2R,3E)-phycocyanobilin.

The protein belongs to the phycobiliprotein family. As to quaternary structure, component of the phycobilisome. Heterodimer of an alpha and a beta chain. In terms of processing, contains one covalently linked bilin chromophore.

It is found in the cellular thylakoid membrane. Its function is as follows. Light-harvesting photosynthetic bile pigment-protein from the phycobiliprotein complex. Allophycocyanin has a maximum absorption at approximately 650 nanometers. In Microchaete diplosiphon (Fremyella diplosiphon), this protein is Allophycocyanin alpha chain 1.